A 209-amino-acid polypeptide reads, in one-letter code: Casparian strip membrane protein 1 (209 aa).

A disordered region spans residues 1–35; sequence MKTGESTAIDIAPETNNSGPIGKKKSTTPLLAAPV. Residues 1–46 are Cytoplasmic-facing; sequence MKTGESTAIDIAPETNNSGPIGKKKSTTPLLAAPVPDRGTHRMKRG. A helical membrane pass occupies residues 47-67; that stretch reads LAIFDFVLRIGVLASALAAAA. At 68-96 the chain is on the extracellular side; sequence AMGTSEQTLPFFTQFFQFEASYDDLPTFQ. Residues 97–117 traverse the membrane as a helical segment; the sequence is FFVVAMAVVAGYVVLSIPFSI. The Cytoplasmic portion of the chain corresponds to 118–129; sequence VCIIRPHAAGPR. The chain crosses the membrane as a helical span at residues 130–150; the sequence is VLLLILDSVALTLNTAAAGAA. Over 151–182 the chain is Extracellular; sequence AAVVSLAHSGNSSTNWLAICNQFGDFCQQASG. N-linked (GlcNAc...) asparagine glycosylation is present at Asn-161. Residues 183-203 form a helical membrane-spanning segment; it reads AVVGSFAAVLLFLLLILFSAL. Over 204–209 the chain is Cytoplasmic; that stretch reads SLKNSH.

This sequence belongs to the Casparian strip membrane proteins (CASP) family. In terms of assembly, homodimer and heterodimers.

The protein resides in the cell membrane. Functionally, regulates membrane-cell wall junctions and localized cell wall deposition. Required for establishment of the Casparian strip membrane domain (CSD) and the subsequent formation of Casparian strips, a cell wall modification of the root endodermis that determines an apoplastic barrier between the intraorganismal apoplasm and the extraorganismal apoplasm and prevents lateral diffusion. In Cucumis melo (Muskmelon), this protein is Casparian strip membrane protein 1.